The sequence spans 321 residues: Ribonuclease Z (321 aa).

Positions 62, 64, 66, 67, 139, 210, and 268 each coordinate Zn(2+). Asp66 functions as the Proton acceptor in the catalytic mechanism.

It belongs to the RNase Z family. Homodimer. Zn(2+) is required as a cofactor.

It catalyses the reaction Endonucleolytic cleavage of RNA, removing extra 3' nucleotides from tRNA precursor, generating 3' termini of tRNAs. A 3'-hydroxy group is left at the tRNA terminus and a 5'-phosphoryl group is left at the trailer molecule.. In terms of biological role, zinc phosphodiesterase, which displays some tRNA 3'-processing endonuclease activity. Probably involved in tRNA maturation, by removing a 3'-trailer from precursor tRNA. This chain is Ribonuclease Z, found in Trichodesmium erythraeum (strain IMS101).